We begin with the raw amino-acid sequence, 960 residues long: Vacuolar membrane protease (960 aa).

Residues 1 to 57 lie on the Cytoplasmic side of the membrane; it reads MADNNSSSGSLVIDEQDYDVHEAGQQGQQGQQKHQQRQQERPSLITRVFRSVFGYRK. Residues 22 to 41 form a disordered region; it reads EAGQQGQQGQQKHQQRQQER. Low complexity predominate over residues 24-33; it reads GQQGQQGQQK. The chain crosses the membrane as a helical span at residues 58 to 78; sequence TSLSLFVVATIALCVSLSYID. The Vacuolar portion of the chain corresponds to 79–401; it reads NSVDFISFPT…FTISTSQLFK (323 aa). N-linked (GlcNAc...) asparagine glycosylation is present at Asn148. His189 and Asp201 together coordinate Zn(2+). Glu235 serves as the catalytic Proton acceptor. Zn(2+)-binding residues include Glu236, Glu261, and His333. Residues 402–422 form a helical membrane-spanning segment; that stretch reads INVALLTVFPILNGLLLLYTI. Residues 423 to 432 lie on the Cytoplasmic side of the membrane; the sequence is RSRKWQVSFS. Residues 433 to 453 form a helical membrane-spanning segment; the sequence is SAISIPVALLVTMFIVVYLVV. Over 454–476 the chain is Vacuolar; sequence ESYKSFNQYLPSSRPLLLVATIT. The chain crosses the membrane as a helical span at residues 477 to 497; that stretch reads SILLLVFSIILVAFSFFSIIA. The Cytoplasmic portion of the chain corresponds to 498-502; it reads EENLR. A helical transmembrane segment spans residues 503–523; sequence LLAIVELSFAYWVGLAFTTHG. The Vacuolar portion of the chain corresponds to 524-535; it reads LSGAESARHSGE. The helical transmembrane segment at 536–556 threads the bilayer; sequence FAVSILFTLEAVASFLGLIGW. Residues 557 to 635 are Cytoplasmic-facing; the sequence is SLCRNRSHLQ…FGYDWSLQYL (79 aa). Residues 587–605 are compositionally biased toward basic and acidic residues; sequence NDHDHEHRHGHEDNEHGEA. The disordered stretch occupies residues 587-614; that stretch reads NDHDHEHRHGHEDNEHGEAHVQQQSQSR. A helical membrane pass occupies residues 636–656; it reads ITVPLSIFIIYNSGWLVLEGV. Asn657 carries N-linked (GlcNAc...) asparagine glycosylation. Residues 657-668 lie on the Vacuolar side of the membrane; it reads NKTLQESAKAET. Residues 669 to 689 form a helical membrane-spanning segment; it reads FVYNLLWIVSVSLVLPLIPFA. Residues 690-696 are Cytoplasmic-facing; the sequence is GKLNRYM. The chain crosses the membrane as a helical span at residues 697 to 717; it reads VFVLIAIGVLGTLLVHVVQPF. Over 718 to 960 the chain is Vacuolar; the sequence is NEANPLKLRF…LVAYTKQVHV (243 aa). N-linked (GlcNAc...) asparagine glycans are attached at residues Asn736, Asn763, Asn803, Asn875, and Asn921.

Belongs to the peptidase M28 family. Zn(2+) serves as cofactor.

It is found in the vacuole membrane. Its function is as follows. May be involved in vacuolar sorting and osmoregulation. This Lodderomyces elongisporus (strain ATCC 11503 / CBS 2605 / JCM 1781 / NBRC 1676 / NRRL YB-4239) (Yeast) protein is Vacuolar membrane protease.